The following is a 308-amino-acid chain: Oxygen-dependent coproporphyrinogen-III oxidase (308 aa).

Serine 100 provides a ligand contact to substrate. 2 residues coordinate a divalent metal cation: histidine 104 and histidine 114. Histidine 114 acts as the Proton donor in catalysis. Substrate is bound at residue 116–118 (NFR). A divalent metal cation contacts are provided by histidine 153 and histidine 183. Positions 248–283 (YVEFNLVFDRGTIFGLQSGGRTESILSSMPPMATWK) are important for dimerization. 266–268 (GGR) lines the substrate pocket.

Belongs to the aerobic coproporphyrinogen-III oxidase family. In terms of assembly, homodimer. The cofactor is a divalent metal cation.

The protein resides in the cytoplasm. The enzyme catalyses coproporphyrinogen III + O2 + 2 H(+) = protoporphyrinogen IX + 2 CO2 + 2 H2O. The protein operates within porphyrin-containing compound metabolism; protoporphyrin-IX biosynthesis; protoporphyrinogen-IX from coproporphyrinogen-III (O2 route): step 1/1. Functionally, involved in the heme biosynthesis. Catalyzes the aerobic oxidative decarboxylation of propionate groups of rings A and B of coproporphyrinogen-III to yield the vinyl groups in protoporphyrinogen-IX. This is Oxygen-dependent coproporphyrinogen-III oxidase from Francisella tularensis subsp. holarctica (strain OSU18).